We begin with the raw amino-acid sequence, 292 residues long: Polyisoprenoid diphosphate/phosphate phosphohydrolase PLPP6 (292 aa).

Disordered regions lie at residues Met1 to Gly34 and Gly66 to Asp86. Topologically, residues Met1–Met131 are cytoplasmic. Residues Gly10 to Pro25 are compositionally biased toward low complexity. Ser24 and Ser67 each carry phosphoserine. Residues Pro69–Ala79 are compositionally biased toward low complexity. A helical membrane pass occupies residues Lys132–Leu152. The Lumenal segment spans residues Arg153–Glu161. A helical membrane pass occupies residues Val162–Gly182. The interval Lys181 to Pro189 is phosphatase sequence motif I. Residues Leu183–His225 are Cytoplasmic-facing. The interval Pro208–His211 is phosphatase sequence motif II. Catalysis depends on His211, which acts as the Proton donors. A helical membrane pass occupies residues Leu226–Ser246. Positions Ser246–Asp257 are phosphatase sequence motif III. Topologically, residues Arg247–Asp257 are lumenal. His253 serves as the catalytic Nucleophile. The helical transmembrane segment at Val258 to Ser278 threads the bilayer. The Cytoplasmic portion of the chain corresponds to Pro279–Gln292.

The protein belongs to the PA-phosphatase related phosphoesterase family. In terms of processing, phosphorylation by PKC activates the phosphatase activity towards presqualene diphosphate.

The protein localises to the endoplasmic reticulum membrane. It is found in the nucleus envelope. Its subcellular location is the nucleus inner membrane. The catalysed reaction is presqualene diphosphate + H2O = presqualene phosphate + phosphate + H(+). The enzyme catalyses presqualene phosphate + H2O = presqualene alcohol + phosphate. It catalyses the reaction (2E,6E)-farnesyl diphosphate + H2O = (2E,6E)-farnesyl phosphate + phosphate + H(+). It carries out the reaction (2E,6E)-farnesyl phosphate + H2O = (2E,6E)-farnesol + phosphate. The catalysed reaction is (2E,6E,10E)-geranylgeranyl diphosphate + H2O = (2E,6E,10E)-geranylgeranyl phosphate + phosphate + H(+). The enzyme catalyses (2E,6E,10E)-geranylgeranyl phosphate + H2O = (2E,6E,10E)-geranylgeraniol + phosphate. It catalyses the reaction (2E)-geranyl diphosphate + H2O = (2E)-geranyl phosphate + phosphate + H(+). It carries out the reaction (2E)-geranyl phosphate + H2O = (2E)-geraniol + phosphate. The catalysed reaction is 1,2-dihexadecanoyl-sn-glycero-3-phosphate + H2O = 1,2-dihexadecanoyl-sn-glycerol + phosphate. Its function is as follows. Magnesium-independent polyisoprenoid diphosphatase that catalyzes the sequential dephosphorylation of presqualene, farnesyl, geranyl and geranylgeranyl diphosphates. Functions in the innate immune response through the dephosphorylation of presqualene diphosphate which acts as a potent inhibitor of the signaling pathways contributing to polymorphonuclear neutrophils activation. May regulate the biosynthesis of cholesterol and related sterols by dephosphorylating presqualene and farnesyl diphosphate, two key intermediates in this biosynthetic pathway. May also play a role in protein prenylation by acting on farnesyl diphosphate and its derivative geranylgeranyl diphosphate, two precursors for the addition of isoprenoid anchors to membrane proteins. Has a lower activity towards phosphatidic acid (PA), but through phosphatidic acid dephosphorylation may participate in the biosynthesis of phospholipids and triacylglycerols. May also act on ceramide-1-P, lysophosphatidic acid (LPA) and sphing-4-enine 1-phosphate/sphingosine-1-phosphate. This Mus musculus (Mouse) protein is Polyisoprenoid diphosphate/phosphate phosphohydrolase PLPP6.